Here is a 408-residue protein sequence, read N- to C-terminus: Broad specificity amino-acid racemase (408 aa).

The signal sequence occupies residues 1–24 (MNFKKTLLSIAIASASLTPAFSYS). The cysteines at positions 71 and 97 are disulfide-linked. The Proton acceptor role is filled by Lys75. Lys75 carries the N6-(pyridoxal phosphate)lysine modification. Arg174 provides a ligand contact to substrate. Residue Tyr300 is the Proton acceptor of the active site. Met348 is a substrate binding site.

The protein belongs to the alanine racemase family. Bsr subfamily. Pyridoxal 5'-phosphate is required as a cofactor.

The protein localises to the periplasm. It catalyses the reaction an L-alpha-amino acid = a D-alpha-amino acid. The catalysed reaction is L-lysine = D-lysine. The enzyme catalyses L-arginine = D-arginine. Amino-acid racemase able to utilize a broad range of substrates. The polypeptide is Broad specificity amino-acid racemase (alr) (Vibrio vulnificus (strain CMCP6)).